A 437-amino-acid chain; its full sequence is Putative galacturan 1,4-alpha-galacturonidase A (437 aa).

Residues 1 to 20 (MKLSGSSALLLLGFGLLGHA) form the signal peptide. Residues N30, N101, N110, N161, N196, and N203 are each glycosylated (N-linked (GlcNAc...) asparagine). One copy of the PbH1 1 repeat lies at 222-243 (SDHVTITNWVYEGGDDAVAFKP). D236 functions as the Proton donor in the catalytic mechanism. N244, N252, N278, N324, N352, N371, N382, and N387 each carry an N-linked (GlcNAc...) asparagine glycan. 3 PbH1 repeats span residues 245–265 (STNI…AFGS), 276–302 (VENI…YFKS), and 322–343 (VRNV…YIDT). C396 and C402 are disulfide-bonded.

Belongs to the glycosyl hydrolase 28 family.

The protein localises to the secreted. It carries out the reaction [(1-&gt;4)-alpha-D-galacturonosyl](n) + H2O = alpha-D-galacturonate + [(1-&gt;4)-alpha-D-galacturonosyl](n-1). In terms of biological role, specific in hydrolyzing the terminal glycosidic bond of polygalacturonic acid and oligogalacturonates. This Aspergillus flavus (strain ATCC 200026 / FGSC A1120 / IAM 13836 / NRRL 3357 / JCM 12722 / SRRC 167) protein is Putative galacturan 1,4-alpha-galacturonidase A (rgxA).